A 291-amino-acid polypeptide reads, in one-letter code: ATP synthase gamma chain (291 aa).

Belongs to the ATPase gamma chain family. In terms of assembly, F-type ATPases have 2 components, CF(1) - the catalytic core - and CF(0) - the membrane proton channel. CF(1) has five subunits: alpha(3), beta(3), gamma(1), delta(1), epsilon(1). CF(0) has three main subunits: a, b and c.

The protein resides in the cell inner membrane. Its function is as follows. Produces ATP from ADP in the presence of a proton gradient across the membrane. The gamma chain is believed to be important in regulating ATPase activity and the flow of protons through the CF(0) complex. The chain is ATP synthase gamma chain from Pelodictyon phaeoclathratiforme (strain DSM 5477 / BU-1).